The sequence spans 319 residues: 1-aminocyclopropane-1-carboxylate oxidase 1 (319 aa).

In terms of domain architecture, Fe2OG dioxygenase spans 153-253 (PNFGTKVSNY…RMSLASFYNP (101 aa)). Fe cation is bound by residues histidine 177, aspartate 179, and histidine 234.

It belongs to the iron/ascorbate-dependent oxidoreductase family. It depends on Fe cation as a cofactor.

The catalysed reaction is 1-aminocyclopropane-1-carboxylate + L-ascorbate + O2 = ethene + L-dehydroascorbate + hydrogen cyanide + CO2 + 2 H2O. It functions in the pathway alkene biosynthesis; ethylene biosynthesis via S-adenosyl-L-methionine; ethylene from S-adenosyl-L-methionine: step 2/2. In Petunia hybrida (Petunia), this protein is 1-aminocyclopropane-1-carboxylate oxidase 1 (ACO1).